Reading from the N-terminus, the 532-residue chain is [Pyruvate dehydrogenase [acetyl-transferring]]-phosphatase 2, mitochondrial (532 aa).

The N-terminal 69 residues, 1–69 (MSSTVSYWIF…FALRKAYRHT (69 aa)), are a transit peptide targeting the mitochondrion. Residues 107 to 518 (NSVLRFESNQ…YRDDITVMVV (412 aa)) form the PPM-type phosphatase domain. The Mn(2+) site is built by Asp-144, Gly-145, Asp-415, and Asp-511.

Belongs to the PP2C family. Mg(2+) serves as cofactor.

It localises to the mitochondrion. The catalysed reaction is O-phospho-L-seryl-[pyruvate dehydrogenase E1 alpha subunit] + H2O = L-seryl-[pyruvate dehydrogenase E1 alpha subunit] + phosphate. In terms of biological role, mitochondrial enzyme that catalyzes the dephosphorylation and concomitant reactivation of the alpha subunit of the E1 component of the pyruvate dehydrogenase complex (PDC), thereby stimulating the conversion of pyruvate into acetyl-CoA. Acts as a crucial regulator of T cell metabolism and function, with a particular focus on T-helper Th17. The sequence is that of [Pyruvate dehydrogenase [acetyl-transferring]]-phosphatase 2, mitochondrial (Pdp2) from Mus musculus (Mouse).